We begin with the raw amino-acid sequence, 1397 residues long: Probable cyclin-dependent serine/threonine-protein kinase DDB_G0292550 (1397 aa).

Positions Phe4–Phe287 constitute a Protein kinase domain. ATP contacts are provided by residues Ile10–Val18 and Lys33. Residue Asp124 is the Proton acceptor of the active site. 8 disordered regions span residues Asn412–Asn567, Pro671–Phe728, Asn763–Asn831, Asn845–His949, Asn996–Asn1101, Asn1115–Val1174, Asn1227–Leu1324, and Lys1340–Asp1397. Low complexity predominate over residues Ser676 to Gln715. Composition is skewed to low complexity over residues Asn845–Gly941, Asn1012–Asn1021, Asn1028–Asn1101, and Asn1115–Asn1155. Residues Thr1156 to Asn1171 show a composition bias toward polar residues. Low complexity-rich tracts occupy residues Asn1253–Ser1321 and Ser1354–Gln1380.

This sequence belongs to the protein kinase superfamily. CMGC Ser/Thr protein kinase family. CDC2/CDKX subfamily.

The catalysed reaction is L-seryl-[protein] + ATP = O-phospho-L-seryl-[protein] + ADP + H(+). The enzyme catalyses L-threonyl-[protein] + ATP = O-phospho-L-threonyl-[protein] + ADP + H(+). In Dictyostelium discoideum (Social amoeba), this protein is Probable cyclin-dependent serine/threonine-protein kinase DDB_G0292550.